The primary structure comprises 517 residues: Golgi-associated kinase 1B (517 aa).

The Cytoplasmic portion of the chain corresponds to 1 to 36 (MTCPDKPGQLVNWFVCSLCAPRVCKLWSSRRPRTRR). The chain crosses the membrane as a helical; Signal-anchor for type II membrane protein span at residues 37–56 (NLLLGTACAIYLGFLVSQVG). Over 57–517 (RGSFQHGQAT…HGARVLPMNE (461 aa)) the chain is Extracellular. N-linked (GlcNAc...) asparagine glycans are attached at residues Asn-98 and Asn-287.

The protein belongs to the GASK family.

It localises to the golgi apparatus membrane. This Mus musculus (Mouse) protein is Golgi-associated kinase 1B.